We begin with the raw amino-acid sequence, 310 residues long: MRKLILCNPRGFCSGVVRAIQVVEVALEKWGAPIYVKHEIVHNRHVVNALRAKGAIFVEELVDVPEGERVIYSAHGIPPSVRAEAKARKLIDIDATCGLVTKVHSAAKLYASKGYKIILIGHKKHVEVIGIVGEVPEHITVVEKVADVEALPFSSDTPLFYITQTTLSLDDVQEISSALLKRYPSIITLPSSSICYATTNRQKALRSVLSRVNYVYVVGDVNSSNSNRLREVALRRGVPADLINNPEDIDTNIVNHSGDIAMTAGASTPEDVVQACIRKLSSLIPGLQVENDIFAVEDVVFQLPKELRCS.

Cysteine 13 contributes to the [4Fe-4S] cluster binding site. 2 residues coordinate (2E)-4-hydroxy-3-methylbut-2-enyl diphosphate: histidine 42 and histidine 75. Residues histidine 42 and histidine 75 each contribute to the dimethylallyl diphosphate site. Positions 42 and 75 each coordinate isopentenyl diphosphate. Residue cysteine 97 participates in [4Fe-4S] cluster binding. Histidine 125 is a binding site for (2E)-4-hydroxy-3-methylbut-2-enyl diphosphate. Histidine 125 is a binding site for dimethylallyl diphosphate. Residue histidine 125 coordinates isopentenyl diphosphate. The active-site Proton donor is glutamate 127. Threonine 165 contributes to the (2E)-4-hydroxy-3-methylbut-2-enyl diphosphate binding site. Cysteine 195 serves as a coordination point for [4Fe-4S] cluster. Positions 223, 224, 225, and 267 each coordinate (2E)-4-hydroxy-3-methylbut-2-enyl diphosphate. Dimethylallyl diphosphate contacts are provided by serine 223, serine 224, asparagine 225, and serine 267. 4 residues coordinate isopentenyl diphosphate: serine 223, serine 224, asparagine 225, and serine 267.

The protein belongs to the IspH family. Requires [4Fe-4S] cluster as cofactor.

It carries out the reaction isopentenyl diphosphate + 2 oxidized [2Fe-2S]-[ferredoxin] + H2O = (2E)-4-hydroxy-3-methylbut-2-enyl diphosphate + 2 reduced [2Fe-2S]-[ferredoxin] + 2 H(+). The catalysed reaction is dimethylallyl diphosphate + 2 oxidized [2Fe-2S]-[ferredoxin] + H2O = (2E)-4-hydroxy-3-methylbut-2-enyl diphosphate + 2 reduced [2Fe-2S]-[ferredoxin] + 2 H(+). Its pathway is isoprenoid biosynthesis; dimethylallyl diphosphate biosynthesis; dimethylallyl diphosphate from (2E)-4-hydroxy-3-methylbutenyl diphosphate: step 1/1. It functions in the pathway isoprenoid biosynthesis; isopentenyl diphosphate biosynthesis via DXP pathway; isopentenyl diphosphate from 1-deoxy-D-xylulose 5-phosphate: step 6/6. Catalyzes the conversion of 1-hydroxy-2-methyl-2-(E)-butenyl 4-diphosphate (HMBPP) into a mixture of isopentenyl diphosphate (IPP) and dimethylallyl diphosphate (DMAPP). Acts in the terminal step of the DOXP/MEP pathway for isoprenoid precursor biosynthesis. This is 4-hydroxy-3-methylbut-2-enyl diphosphate reductase from Chlamydia pneumoniae (Chlamydophila pneumoniae).